The sequence spans 423 residues: Histidine--tRNA ligase (423 aa).

The protein belongs to the class-II aminoacyl-tRNA synthetase family. As to quaternary structure, homodimer.

The protein resides in the cytoplasm. It catalyses the reaction tRNA(His) + L-histidine + ATP = L-histidyl-tRNA(His) + AMP + diphosphate + H(+). This chain is Histidine--tRNA ligase, found in Laribacter hongkongensis (strain HLHK9).